The following is a 580-amino-acid chain: High affinity choline transporter 1 (580 aa).

Residues 1–6 (MPFHVE) are Extracellular-facing. Residues 7–27 (GLVAIILFYLLIFLVGIWAAW) traverse the membrane as a helical segment. The Cytoplasmic segment spans residues 28–48 (KTKNSGNAEERSEAIIVGGRD). A helical membrane pass occupies residues 49 to 69 (IGLLVGGFTMTATWVGGGYIN). At 70–81 (GTAEAVYGPGCG) the chain is on the extracellular side. The helical transmembrane segment at 82 to 102 (LAWAQAPIGYSLSLILGGLFF) threads the bilayer. The Cytoplasmic portion of the chain corresponds to 103–125 (AKPMRSKGYVTMLDPFQQIYGKR). A helical transmembrane segment spans residues 126–146 (MGGLLFIPALMGEMFWAAAIF). The Extracellular segment spans residues 147–164 (SALGATISVIIDVDVNIS). The chain crosses the membrane as a helical span at residues 165 to 185 (VIVSALIAILYTLVGGLYSVA). Residues 186–191 (YTDVVQ) lie on the Cytoplasmic side of the membrane. Residues 192 to 212 (LFCIFIGLWISVPFALSHPAV) traverse the membrane as a helical segment. Over 213-237 (TDIGFTAVHAKYQSPWLGTIESVEV) the chain is Extracellular. Residues 238 to 258 (YTWLDNFLLLMLGGIPWQAYF) traverse the membrane as a helical segment. Topologically, residues 259 to 274 (QRVLSSSSATYAQVLS) are cytoplasmic. A helical transmembrane segment spans residues 275–295 (FLAAFGCLVMALPAICIGAIG). The Extracellular segment spans residues 296–317 (ASTDWNQTAYGFPDPKTKEEAD). Asn301 carries an N-linked (GlcNAc...) asparagine glycan. A helical transmembrane segment spans residues 318–338 (MILPIVLQYLCPVYISFFGLG). Over 339–376 (AVSAAVMSSADSSILSASSMFARNIYQLSFRQNASDKE) the chain is Cytoplasmic. The chain crosses the membrane as a helical span at residues 377–397 (IVWVMRITVFVFGASATAMAL). Residues 398 to 406 (LTKTVYGLW) lie on the Extracellular side of the membrane. The chain crosses the membrane as a helical span at residues 407 to 427 (YLSSDLVYIIIFPQLLCVLFI). Over 428 to 435 (KGTNTYGA) the chain is Cytoplasmic. A helical membrane pass occupies residues 436–456 (VAGYIFGLFLRITGGEPYLYL). The Extracellular portion of the chain corresponds to 457–481 (QPLIFYPGYYPDKNGIYNQRFPFKT). The helical transmembrane segment at 482-502 (LSMVTSFFTNICVSYLAKYLF) threads the bilayer. The mediates interaction with SEC14L1 stretch occupies residues 502–580 (FESGTLPPKL…EGSGTEDNLQ (79 aa)). Residues 503 to 580 (ESGTLPPKLD…EGSGTEDNLQ (78 aa)) are Cytoplasmic-facing. A Dileucine-like motif motif is present at residues 527-532 (DKTILV).

Belongs to the sodium:solute symporter (SSF) (TC 2.A.21) family. As to quaternary structure, homooligomerizes at cell surface. Interacts with SEC14L1; may regulate SLC5A7. In terms of processing, phosphorylated. As to expression, expressed in basal forebrain, brain stem, spinal chord, and striatum. Specific for cholinergic neurons.

The protein localises to the presynaptic cell membrane. Its subcellular location is the cell projection. It localises to the axon. The protein resides in the early endosome membrane. It is found in the cytoplasmic vesicle. The protein localises to the secretory vesicle. Its subcellular location is the synaptic vesicle membrane. It carries out the reaction choline(out) + n Na(+)(out) = choline(in) + n Na(+)(in). Choline uptake activity is regulated by SLC5A7/CHT1 internalization (inactive form) from the cell surface and recycling of internalized SLC5A7/CHT1 into the cell surface (active form). Activated by extracellular chloride ion. Specifically inhibited by nanomolar concentrations of hemicholinium 3. In terms of biological role, high-affinity Na(+)-coupled choline transmembrane symporter. Functions as an electrogenic, voltage-dependent transporter with variable charge/choline stoichiometry. Choline uptake and choline-induced current is also Cl(-)-dependent where Cl(-) is likely a regulatory ion rather than cotransported ion. Plays a critical role in acetylcholine (ACh) synthesis by taking up the substrate choline from the synaptic cleft into the presynaptic nerve terminals after neurotransmitter release. SLC5A7/CHT1-mediated choline high-affinity transport in cholinergic neurons is the rate-limiting step for production of ACh, thereby facilitating communication by subsequent action potentials. Localized predominantly in presynaptic terminal intracellular organelles, and translocated to the plasma membrane in active form in response to neuronal activity. The chain is High affinity choline transporter 1 from Rattus norvegicus (Rat).